The sequence spans 366 residues: Cyanide hydratase (366 aa).

One can recognise a CN hydrolase domain in the interval Tyr6–Leu285. Glu46 (proton acceptor) is an active-site residue. Lys128 is a catalytic residue. The Nucleophile role is filled by Cys163.

The protein belongs to the carbon-nitrogen hydrolase superfamily. Nitrilase family. Oligomer of dimers, forming left-handed helical fibers.

It catalyses the reaction formamide = hydrogen cyanide + H2O. Catalyzes the hydration of cyanide to formamide. Degradation of cyanide may be important for plant pathogenic fungi in infection of cyanogenic plants. Can also transform some nitriles like 2-cyanopyridine and fumaronitrile. The sequence is that of Cyanide hydratase from Pyrenophora teres f. teres (strain 0-1) (Barley net blotch fungus).